A 748-amino-acid polypeptide reads, in one-letter code: Tyrosine--tRNA ligase 2, cytoplasmic (748 aa).

The residue at position 1 (M1) is an N-acetylmethionine. Residues 441-449 carry the 'HIGH' region motif; it reads PSGRMHIAQ. L-tyrosine contacts are provided by Y564, Q568, D571, and Q586. The 'KMSKS' region motif lies at 623–627; it reads KMSKS. Position 626 (K626) interacts with ATP.

This sequence belongs to the class-I aminoacyl-tRNA synthetase family.

The protein resides in the cytoplasm. It is found in the cytosol. It catalyses the reaction tRNA(Tyr) + L-tyrosine + ATP = L-tyrosyl-tRNA(Tyr) + AMP + diphosphate + H(+). Catalyzes the attachment of tyrosine to tRNA(Tyr) in a two-step reaction: tyrosine is first activated by ATP to form Tyr-AMP and then transferred to the acceptor end of tRNA(Tyr). This Arabidopsis thaliana (Mouse-ear cress) protein is Tyrosine--tRNA ligase 2, cytoplasmic.